The chain runs to 506 residues: Glutamate--tRNA ligase (506 aa).

The 'HIGH' region signature appears at 12-22; it reads PSPTGDPHVGT. Positions 253–257 match the 'KMSKS' region motif; sequence KLSKR. An ATP-binding site is contributed by Lys-256.

It belongs to the class-I aminoacyl-tRNA synthetase family. Glutamate--tRNA ligase type 1 subfamily. In terms of assembly, monomer.

Its subcellular location is the cytoplasm. It carries out the reaction tRNA(Glu) + L-glutamate + ATP = L-glutamyl-tRNA(Glu) + AMP + diphosphate. Catalyzes the attachment of glutamate to tRNA(Glu) in a two-step reaction: glutamate is first activated by ATP to form Glu-AMP and then transferred to the acceptor end of tRNA(Glu). The sequence is that of Glutamate--tRNA ligase from Chlamydia trachomatis serovar L2 (strain ATCC VR-902B / DSM 19102 / 434/Bu).